We begin with the raw amino-acid sequence, 427 residues long: 3-phosphoshikimate 1-carboxyvinyltransferase (427 aa).

3-phosphoshikimate contacts are provided by lysine 20, serine 21, and arginine 25. Residue lysine 20 participates in phosphoenolpyruvate binding. The phosphoenolpyruvate site is built by glycine 92 and arginine 120. Residues serine 166, glutamine 168, aspartate 312, and lysine 339 each coordinate 3-phosphoshikimate. Residue glutamine 168 participates in phosphoenolpyruvate binding. Aspartate 312 (proton acceptor) is an active-site residue. Phosphoenolpyruvate contacts are provided by arginine 343 and arginine 385.

This sequence belongs to the EPSP synthase family. Monomer.

Its subcellular location is the cytoplasm. The enzyme catalyses 3-phosphoshikimate + phosphoenolpyruvate = 5-O-(1-carboxyvinyl)-3-phosphoshikimate + phosphate. It functions in the pathway metabolic intermediate biosynthesis; chorismate biosynthesis; chorismate from D-erythrose 4-phosphate and phosphoenolpyruvate: step 6/7. Functionally, catalyzes the transfer of the enolpyruvyl moiety of phosphoenolpyruvate (PEP) to the 5-hydroxyl of shikimate-3-phosphate (S3P) to produce enolpyruvyl shikimate-3-phosphate and inorganic phosphate. This is 3-phosphoshikimate 1-carboxyvinyltransferase from Streptococcus pyogenes serotype M49 (strain NZ131).